The sequence spans 345 residues: Dihydroorotase (345 aa).

The Zn(2+) site is built by H13 and H15. Substrate contacts are provided by residues 15 to 17 and N41; that span reads HLR. Residues K99, H136, and H174 each contribute to the Zn(2+) site. K99 bears the N6-carboxylysine mark. Residue H136 participates in substrate binding. L219 contacts substrate. Residue D247 coordinates Zn(2+). Residue D247 is part of the active site. Residues H251 and A263 each coordinate substrate.

It belongs to the metallo-dependent hydrolases superfamily. DHOase family. Class II DHOase subfamily. Homodimer. Requires Zn(2+) as cofactor.

It carries out the reaction (S)-dihydroorotate + H2O = N-carbamoyl-L-aspartate + H(+). It participates in pyrimidine metabolism; UMP biosynthesis via de novo pathway; (S)-dihydroorotate from bicarbonate: step 3/3. Catalyzes the reversible cyclization of carbamoyl aspartate to dihydroorotate. The sequence is that of Dihydroorotase from Hahella chejuensis (strain KCTC 2396).